A 550-amino-acid polypeptide reads, in one-letter code: Cyclopentanone 1,2-monooxygenase (550 aa).

Residues 31-32 (FT), D51, W60, D71, Y77, and V123 each bind FAD.

This sequence belongs to the FAD-binding monooxygenase family. As to quaternary structure, homotetramer. Requires FAD as cofactor.

It carries out the reaction cyclopentanone + NADPH + O2 + H(+) = 5-valerolactone + NADP(+) + H2O. Its pathway is alcohol metabolism; cyclopentanol degradation; 5-valerolactone from cyclopentanol: step 2/2. Its function is as follows. Catalyzes a Baeyer-Villiger oxidation reaction, i.e. the insertion of an oxygen atom into a carbon-carbon bond adjacent to a carbonyl, which converts ketones to esters or lactones using NADPH as an electron donor. Converts cyclopentanone to 5-valerolactone, a step in the degradation pathway of cyclopentanol. Besides cycloalkanones, can also act on methylated and other alkylated cycloalkanones, and on methylated cycloalkenones, with high enantioselectivity in some cases. Cannot use NADH instead of NADPH. The sequence is that of Cyclopentanone 1,2-monooxygenase (cpnB) from Comamonas sp. (strain NCIMB 9872).